We begin with the raw amino-acid sequence, 350 residues long: Cephaeline 6'-O-methyltransferase IpeOMT1 (350 aa).

Residues Gly-193, Asp-216, Asp-236, Met-237, and Lys-250 each coordinate S-adenosyl-L-methionine. The active-site Proton acceptor is His-254.

It belongs to the class I-like SAM-binding methyltransferase superfamily. Cation-independent O-methyltransferase family. In terms of tissue distribution, expressed in roots.

The protein resides in the cytoplasm. It is found in the cytosol. It catalyses the reaction cephaeline + S-adenosyl-L-methionine = emetine + S-adenosyl-L-homocysteine + H(+). The enzyme catalyses deacetylisoipecoside + S-adenosyl-L-methionine = 6-O-methyldeacetylisoipecoside + S-adenosyl-L-homocysteine + H(+). It carries out the reaction 7-O-methyldeacetylisoipecoside + S-adenosyl-L-methionine = 6,7-O,O-dimethyldeacetylisoipecoside + S-adenosyl-L-homocysteine + H(+). The catalysed reaction is norcoclaurine + S-adenosyl-L-methionine = coclaurine + S-adenosyl-L-homocysteine + H(+). It catalyses the reaction (S)-norprotosinomenine + S-adenosyl-L-methionine = (S)-6-O-methylnorprotosinomenine + S-adenosyl-L-homocysteine + H(+). The enzyme catalyses (R)-norprotosinomenine + S-adenosyl-L-methionine = (R)-6-O-methylnorprotosinomenine + S-adenosyl-L-homocysteine + H(+). It functions in the pathway alkaloid biosynthesis. Its function is as follows. O-methyltransferase involved in the biosynthesis of ipecac and benzylisoquinoline monoterpenoid-isoquinoline alkaloids natural products, starting by the condensation of dopamine and secologanin, and including emetine and cephaeline, drugs used both as anti-protozoal (e.g. treatment of ameobiasis) and as emetic agents. Mediates cephaeline 6'-O-methylation to produce emetine. Catalyzes the 6-O-methylation of N-deacetylisoipecoside, 7-O-methyl-N-deacetylisoipecoside, isococlaurine, norcoclaurine, (S)-norprotosinomenine and (R)-norprotosinomenine, and, with a lower efficiency, of 4'-O-methyllaudanosoline, isoorientaline and protosinomenine. Supports also the 4'-O-methylation of nororientaline. The sequence is that of Cephaeline 6'-O-methyltransferase IpeOMT1 from Carapichea ipecacuanha (Ipecac).